The primary structure comprises 233 residues: Histone H1-I (233 aa).

2 disordered regions span residues 1–55 and 115–233; these read MSDS…HPPV and TGAS…KKSK. Over residues 17–29 the composition is skewed to low complexity; it reads KAATPAKSPAKSP. An H15 domain is found at 51 to 125; the sequence is THPPVSEMVV…GASGSFKMPP (75 aa). 2 stretches are compositionally biased toward basic and acidic residues: residues 128 to 137 and 144 to 155; these read KKVDKPEAAP and PKREIEKKEKKV. Basic residues-rich tracts occupy residues 172-186, 199-213, and 223-233; these read AAKKAVAKPAAKKAA, SPKKAAAKPKAKPTP, and AAAKKPAKKSK.

It belongs to the histone H1/H5 family.

It is found in the nucleus. The protein resides in the chromosome. Its function is as follows. Histones H1 are necessary for the condensation of nucleosome chains into higher-order structures. This is Histone H1-I from Glyptotendipes salinus (Midge).